Consider the following 143-residue polypeptide: MAAAAEGVPATRREEQPPRDDAAVETAEEAKEPAEADINELCRDMFSKMATYLTGELTATSEDYKLLENMNKLTSLKYLEMKDIAINISRNLKDLNQKYAELQPYLDQINMIEEQVAALEQAAYKLDAYSKKLEAKYKKLEKR.

The disordered stretch occupies residues 1–36 (MAAAAEGVPATRREEQPPRDDAAVETAEEAKEPAEA). Position 2 is an N-acetylalanine (Ala2). Residues 11–36 (TRREEQPPRDDAAVETAEEAKEPAEA) are compositionally biased toward basic and acidic residues. Positions 80–128 (EMKDIAINISRNLKDLNQKYAELQPYLDQINMIEEQVAALEQAAYKLDA) form a coiled coil.

The protein belongs to the BLOC1S2 family. As to quaternary structure, component of the biogenesis of lysosome-related organelles complex 1 (BLOC-1) composed of BLOC1S1, BLOC1S2, BLOC1S3, BLOC1S4, BLOC1S5, BLOC1S6, DTNBP1/BLOC1S7 and SNAPIN/BLOC1S8. Octamer composed of one copy each BLOC1S1, BLOC1S2, BLOC1S3, BLOC1S4, BLOC1S5, BLOC1S6, DTNBP1/BLOC1S7 and SNAPIN/BLOC1S8. Interacts directly with BLOC1S1, BLOC1S3, BLOC1S4, BLOC1S5 and SNAPIN. The BLOC-1 complex associates with the AP-3 protein complex and membrane protein cargos. Component of the BLOC-one-related complex (BORC) which is composed of BLOC1S1, BLOC1S2, BORCS5, BORCS6, BORCS7, BORCS8, KXD1 and SNAPIN. Interacts with gamma-tubulin. Interacts with IFT57.

The protein resides in the cytoplasm. It localises to the cytoskeleton. The protein localises to the microtubule organizing center. Its subcellular location is the centrosome. It is found in the lysosome membrane. Functionally, component of the BLOC-1 complex, a complex that is required for normal biogenesis of lysosome-related organelles (LRO), such as platelet dense granules and melanosomes. In concert with the AP-3 complex, the BLOC-1 complex is required to target membrane protein cargos into vesicles assembled at cell bodies for delivery into neurites and nerve terminals. The BLOC-1 complex, in association with SNARE proteins, is also proposed to be involved in neurite extension. As part of the BORC complex may play a role in lysosomes movement and localization at the cell periphery. Associated with the cytosolic face of lysosomes, the BORC complex may recruit ARL8B and couple lysosomes to microtubule plus-end-directed kinesin motor. The sequence is that of Biogenesis of lysosome-related organelles complex 1 subunit 2 (Bloc1s2) from Mus musculus (Mouse).